The chain runs to 404 residues: uncharacterized protein (404 aa).

It belongs to the lymphocryptovirus BTRF1 family.

This is an uncharacterized protein from Epstein-Barr virus (strain GD1) (HHV-4).